Reading from the N-terminus, the 141-residue chain is HTH-type transcriptional repressor NsrR (141 aa).

The HTH rrf2-type domain occupies 2–129 (QLTSFTDYGL…DNYTLADLVE (128 aa)). A DNA-binding region (H-T-H motif) is located at residues 28–51 (ISEVTDVYGVSRNHMVKIINQLSR). Cys-91, Cys-96, and Cys-102 together coordinate [2Fe-2S] cluster.

It depends on [2Fe-2S] cluster as a cofactor.

In terms of biological role, nitric oxide-sensitive repressor of genes involved in protecting the cell against nitrosative stress. May require iron for activity. In Escherichia coli O139:H28 (strain E24377A / ETEC), this protein is HTH-type transcriptional repressor NsrR.